The following is a 424-amino-acid chain: Serine hydroxymethyltransferase (424 aa).

Residues L119 and 123–125 (GHL) contribute to the (6S)-5,6,7,8-tetrahydrofolate site. Position 228 is an N6-(pyridoxal phosphate)lysine (K228). 353–355 (SAF) is a binding site for (6S)-5,6,7,8-tetrahydrofolate.

It belongs to the SHMT family. As to quaternary structure, homodimer. Requires pyridoxal 5'-phosphate as cofactor.

The protein resides in the cytoplasm. The enzyme catalyses (6R)-5,10-methylene-5,6,7,8-tetrahydrofolate + glycine + H2O = (6S)-5,6,7,8-tetrahydrofolate + L-serine. It functions in the pathway one-carbon metabolism; tetrahydrofolate interconversion. The protein operates within amino-acid biosynthesis; glycine biosynthesis; glycine from L-serine: step 1/1. Its function is as follows. Catalyzes the reversible interconversion of serine and glycine with tetrahydrofolate (THF) serving as the one-carbon carrier. Also exhibits THF-independent aldolase activity toward beta-hydroxyamino acids, producing glycine and aldehydes, via a retro-aldol mechanism. This is Serine hydroxymethyltransferase from Natronomonas pharaonis (strain ATCC 35678 / DSM 2160 / CIP 103997 / JCM 8858 / NBRC 14720 / NCIMB 2260 / Gabara) (Halobacterium pharaonis).